We begin with the raw amino-acid sequence, 221 residues long: MRAIAVDIDGTITDKKRRLSLEAVKALRGAEEAGVPVIMVTGNILCFAMATSVLIGASGGVVAENGGVLHINDEVRVLGDISKAEMAYSHLKGIYPVRKVQFSDLRVSEIALTRDVPADTVREALRDFDVEVYDTGFAIHLTDPSVNKGSSLEILLESMGIEMEDVMAIGDSENDLEFIEAAGFRVAVANADPELREMADYVTSAAHGEGVAEAVRRFMGW.

Residue D7 is the Nucleophile of the active site. Mg(2+) is bound by residues D7 and D9. K148 serves as a coordination point for substrate. Residues D171 and D175 each contribute to the Mg(2+) site.

The protein belongs to the archaeal SPP-like hydrolase family. Requires Mg(2+) as cofactor.

The catalysed reaction is 2-phosphoglycolate + H2O = glycolate + phosphate. Its function is as follows. Catalyzes the dephosphorylation of 2-phosphoglycolate. The sequence is that of Phosphoglycolate phosphatase from Methanothermobacter thermautotrophicus (strain ATCC 29096 / DSM 1053 / JCM 10044 / NBRC 100330 / Delta H) (Methanobacterium thermoautotrophicum).